A 147-amino-acid polypeptide reads, in one-letter code: uncharacterized protein (147 aa).

Residues 1-137 (MRDNTIGSLI…LYELMTKVHK (137 aa)) form the HTH marR-type domain. The segment at residues 53–76 (QMELAEKVTVTQGGISRMLTRLEK) is a DNA-binding region (H-T-H motif).

This is an uncharacterized protein from Bacillus thuringiensis subsp. konkukian (strain 97-27).